The following is a 244-amino-acid chain: 7-cyano-7-deazaguanine synthase (244 aa).

Residue 14–24 (FSGGQDSATCV) coordinates ATP. Residues cysteine 202, cysteine 217, cysteine 220, and cysteine 223 each contribute to the Zn(2+) site.

This sequence belongs to the QueC family. Requires Zn(2+) as cofactor.

The catalysed reaction is 7-carboxy-7-deazaguanine + NH4(+) + ATP = 7-cyano-7-deazaguanine + ADP + phosphate + H2O + H(+). The protein operates within purine metabolism; 7-cyano-7-deazaguanine biosynthesis. Its function is as follows. Catalyzes the ATP-dependent conversion of 7-carboxy-7-deazaguanine (CDG) to 7-cyano-7-deazaguanine (preQ(0)). In Burkholderia cenocepacia (strain HI2424), this protein is 7-cyano-7-deazaguanine synthase.